A 361-amino-acid chain; its full sequence is UDP-3-O-acylglucosamine N-acyltransferase (361 aa).

His-253 acts as the Proton acceptor in catalysis.

This sequence belongs to the transferase hexapeptide repeat family. LpxD subfamily. In terms of assembly, homotrimer.

The enzyme catalyses a UDP-3-O-[(3R)-3-hydroxyacyl]-alpha-D-glucosamine + a (3R)-hydroxyacyl-[ACP] = a UDP-2-N,3-O-bis[(3R)-3-hydroxyacyl]-alpha-D-glucosamine + holo-[ACP] + H(+). The protein operates within bacterial outer membrane biogenesis; LPS lipid A biosynthesis. Its function is as follows. Catalyzes the N-acylation of UDP-3-O-acylglucosamine using 3-hydroxyacyl-ACP as the acyl donor. Is involved in the biosynthesis of lipid A, a phosphorylated glycolipid that anchors the lipopolysaccharide to the outer membrane of the cell. The polypeptide is UDP-3-O-acylglucosamine N-acyltransferase (Burkholderia pseudomallei (strain 1710b)).